Here is a 463-residue protein sequence, read N- to C-terminus: Cytoplasmic 60S subunit biogenesis factor SPCC550.15c (463 aa).

2 C2H2-type zinc fingers span residues 5-30 (FACTTCTVAFNNAESQKIHWKSDWHH) and 70-94 (QNCEVCNKKFYSEGAYSSHMASKKH). Positions 109-136 (KLQSEDASSIASSTLSMGEPVVDSEIEE) are disordered. The span at 113–124 (EDASSIASSTLS) shows a compositional bias: polar residues. Phosphoserine occurs at positions 150 and 155. Residues 155–189 (SLHGRESEPSKTELATSIPQSNEASKSHLFTQEPT) form a disordered region. The span at 167 to 188 (ELATSIPQSNEASKSHLFTQEP) shows a compositional bias: polar residues. 2 C2H2-type zinc fingers span residues 208 to 231 (RDCLFCAASFSSFDTCKKHMKASH) and 259 to 283 (FTCLTCNREFKSLEAVRAHMQQKGH). The segment covering 317-338 (TVVEEDGSSGEGDWEDVSDDSD) has biased composition (acidic residues). Disordered stretches follow at residues 317–341 (TVVEEDGSSGEGDWEDVSDDSDNSS) and 444–463 (ANKMGIKNNTKKHFRDALLQ).

Belongs to the REI1 family. As to quaternary structure, associates with nascent pre-60S particles that have not yet entered the translating pool, and is released from mature 60S subunits.

It is found in the cytoplasm. Pre-60S-associated factor involved in the cytoplasmic maturation of the 60S subunit. Involved in the dissociation and recycling of other late pre-60S factors before newly synthesized large ribosomal subunits enter translation. The protein is Cytoplasmic 60S subunit biogenesis factor SPCC550.15c of Schizosaccharomyces pombe (strain 972 / ATCC 24843) (Fission yeast).